Reading from the N-terminus, the 498-residue chain is ATP synthase subunit beta, chloroplastic (498 aa).

172 to 179 lines the ATP pocket; it reads GGAGVGKT.

Belongs to the ATPase alpha/beta chains family. F-type ATPases have 2 components, CF(1) - the catalytic core - and CF(0) - the membrane proton channel. CF(1) has five subunits: alpha(3), beta(3), gamma(1), delta(1), epsilon(1). CF(0) has four main subunits: a(1), b(1), b'(1) and c(9-12).

The protein localises to the plastid. The protein resides in the chloroplast thylakoid membrane. The enzyme catalyses ATP + H2O + 4 H(+)(in) = ADP + phosphate + 5 H(+)(out). Its function is as follows. Produces ATP from ADP in the presence of a proton gradient across the membrane. The catalytic sites are hosted primarily by the beta subunits. The protein is ATP synthase subunit beta, chloroplastic of Drimys granadensis.